Consider the following 630-residue polypeptide: Scarecrow-like protein 34 (630 aa).

One can recognise a GRAS domain in the interval 240 to 628; sequence KKKKSQVVDF…RTLYASSCWV (389 aa). The segment at 247–312 is leucine repeat I (LRI); it reads VDFRTLLTHC…GSTGPMIQTY (66 aa). A VHIID region spans residues 331 to 396; the sequence is YRVYLSSSPF…DVPRKLRITG (66 aa). The short motif at 362–366 is the VHIID element; the sequence is LHIVD. The leucine repeat II (LRII) stretch occupies residues 412 to 444; that stretch reads ETGRRLAEYCKRFNVPFEYKAIASQNWETIRIE. The tract at residues 454–549 is PFYRE; it reads LAVNAGLRLK…REFYGREAMN (96 aa). Residues 552 to 628 are SAW; the sequence is ACEEADRVER…RTLYASSCWV (77 aa).

The protein belongs to the GRAS family.

It localises to the nucleus. Its function is as follows. Probable transcription factor involved in plant development. The chain is Scarecrow-like protein 34 (SCL34) from Arabidopsis thaliana (Mouse-ear cress).